A 301-amino-acid chain; its full sequence is Glutamyl-Q tRNA(Asp) synthetase (301 aa).

Residues 9 to 13 and Glu45 each bind L-glutamate; that span reads RFAPS. Residues 12-22 carry the 'HIGH' region motif; the sequence is PSPTGPLHLGS. Residues Cys101, Cys103, Tyr121, and Cys125 each coordinate Zn(2+). 2 residues coordinate L-glutamate: Tyr179 and Arg197. Positions 235–239 match the 'KMSKS' region motif; that stretch reads KLSKQ. Residue Lys238 participates in ATP binding.

The protein belongs to the class-I aminoacyl-tRNA synthetase family. GluQ subfamily. Requires Zn(2+) as cofactor.

Its function is as follows. Catalyzes the tRNA-independent activation of glutamate in presence of ATP and the subsequent transfer of glutamate onto a tRNA(Asp). Glutamate is transferred on the 2-amino-5-(4,5-dihydroxy-2-cyclopenten-1-yl) moiety of the queuosine in the wobble position of the QUC anticodon. The polypeptide is Glutamyl-Q tRNA(Asp) synthetase (Thiobacillus denitrificans (strain ATCC 25259 / T1)).